We begin with the raw amino-acid sequence, 234 residues long: Zinc finger FYVE domain-containing protein 21 (234 aa).

The FYVE-type zinc-finger motif lies at 44–104; sequence DKECRRCMQC…QCAECALVSL (61 aa). Zn(2+) contacts are provided by Cys50, Cys53, Cys66, Cys69, Cys74, Cys77, Cys96, and Cys99. A PH-like region spans residues 107-234; it reads AEFYDKQLKV…AKLLYESRDQ (128 aa).

Interacts with PTK2/FAK1.

Its subcellular location is the cell junction. The protein localises to the focal adhesion. It is found in the cytoplasmic vesicle. It localises to the endosome. In terms of biological role, plays a role in cell adhesion, and thereby in cell motility which requires repeated formation and disassembly of focal adhesions. Regulates microtubule-induced PTK2/FAK1 dephosphorylation, an event important for focal adhesion disassembly, as well as integrin beta-1/ITGB1 cell surface expression. In Homo sapiens (Human), this protein is Zinc finger FYVE domain-containing protein 21 (ZFYVE21).